We begin with the raw amino-acid sequence, 119 residues long: Immunoglobulin heavy variable 2-26 (119 aa).

The first 19 residues, 1–19, serve as a signal peptide directing secretion; it reads MDTLCYTLLLLTTPSWVLS. A Pyrrolidone carboxylic acid modification is found at Gln20. Residues 20–44 are framework-1; the sequence is QVTLKESGPVLVKPTETLTLTCTVS. In terms of domain architecture, Ig-like spans 20-119; it reads QVTLKESGPV…DTATYYCARI (100 aa). A disulfide bridge links Cys41 with Cys116. Positions 45 to 54 are complementarity-determining-1; it reads GFSLSNARMG. Positions 55 to 71 are framework-2; that stretch reads VSWIRQPPGKALEWLAH. Residues 72–78 form a complementarity-determining-2 region; it reads IFSNDEK. The interval 79 to 116 is framework-3; that stretch reads SYSTSLKSRLTISKDTSKSQVVLTMTNMDPVDTATYYC. Positions 117 to 119 are complementarity-determining-3; that stretch reads ARI.

Immunoglobulins are composed of two identical heavy chains and two identical light chains; disulfide-linked.

The protein resides in the secreted. Its subcellular location is the cell membrane. V region of the variable domain of immunoglobulin heavy chains that participates in the antigen recognition. Immunoglobulins, also known as antibodies, are membrane-bound or secreted glycoproteins produced by B lymphocytes. In the recognition phase of humoral immunity, the membrane-bound immunoglobulins serve as receptors which, upon binding of a specific antigen, trigger the clonal expansion and differentiation of B lymphocytes into immunoglobulins-secreting plasma cells. Secreted immunoglobulins mediate the effector phase of humoral immunity, which results in the elimination of bound antigens. The antigen binding site is formed by the variable domain of one heavy chain, together with that of its associated light chain. Thus, each immunoglobulin has two antigen binding sites with remarkable affinity for a particular antigen. The variable domains are assembled by a process called V-(D)-J rearrangement and can then be subjected to somatic hypermutations which, after exposure to antigen and selection, allow affinity maturation for a particular antigen. The sequence is that of Immunoglobulin heavy variable 2-26 from Homo sapiens (Human).